We begin with the raw amino-acid sequence, 314 residues long: 2,3,4,5-tetrahydropyridine-2,6-dicarboxylate N-succinyltransferase (314 aa).

2 residues coordinate Mg(2+): Asp-163 and Glu-180. The active-site Acyl-anhydride intermediate is Glu-196. Succinyl-CoA is bound by residues Arg-198, Gly-213, Ser-216, Ala-239, 254 to 255 (EA), Gly-262, Lys-274, and 287 to 290 (RRNS).

Belongs to the type 2 tetrahydrodipicolinate N-succinyltransferase family. In terms of assembly, homotrimer.

The protein localises to the cytoplasm. It carries out the reaction (S)-2,3,4,5-tetrahydrodipicolinate + succinyl-CoA + H2O = (S)-2-succinylamino-6-oxoheptanedioate + CoA. The protein operates within amino-acid biosynthesis; L-lysine biosynthesis via DAP pathway; LL-2,6-diaminopimelate from (S)-tetrahydrodipicolinate (succinylase route): step 1/3. In terms of biological role, catalyzes the conversion of the cyclic tetrahydrodipicolinate (THDP) into the acyclic N-succinyl-L-2-amino-6-oxopimelate using succinyl-CoA. In Mycolicibacterium smegmatis (strain ATCC 700084 / mc(2)155) (Mycobacterium smegmatis), this protein is 2,3,4,5-tetrahydropyridine-2,6-dicarboxylate N-succinyltransferase.